The chain runs to 99 residues: Aspartyl/glutamyl-tRNA(Asn/Gln) amidotransferase subunit C (99 aa).

Belongs to the GatC family. Heterotrimer of A, B and C subunits.

It catalyses the reaction L-glutamyl-tRNA(Gln) + L-glutamine + ATP + H2O = L-glutaminyl-tRNA(Gln) + L-glutamate + ADP + phosphate + H(+). The catalysed reaction is L-aspartyl-tRNA(Asn) + L-glutamine + ATP + H2O = L-asparaginyl-tRNA(Asn) + L-glutamate + ADP + phosphate + 2 H(+). Its function is as follows. Allows the formation of correctly charged Asn-tRNA(Asn) or Gln-tRNA(Gln) through the transamidation of misacylated Asp-tRNA(Asn) or Glu-tRNA(Gln) in organisms which lack either or both of asparaginyl-tRNA or glutaminyl-tRNA synthetases. The reaction takes place in the presence of glutamine and ATP through an activated phospho-Asp-tRNA(Asn) or phospho-Glu-tRNA(Gln). This Corynebacterium efficiens (strain DSM 44549 / YS-314 / AJ 12310 / JCM 11189 / NBRC 100395) protein is Aspartyl/glutamyl-tRNA(Asn/Gln) amidotransferase subunit C.